The chain runs to 418 residues: Gamma-glutamyl phosphate reductase (418 aa).

The protein belongs to the gamma-glutamyl phosphate reductase family.

The protein resides in the cytoplasm. It carries out the reaction L-glutamate 5-semialdehyde + phosphate + NADP(+) = L-glutamyl 5-phosphate + NADPH + H(+). It participates in amino-acid biosynthesis; L-proline biosynthesis; L-glutamate 5-semialdehyde from L-glutamate: step 2/2. Its function is as follows. Catalyzes the NADPH-dependent reduction of L-glutamate 5-phosphate into L-glutamate 5-semialdehyde and phosphate. The product spontaneously undergoes cyclization to form 1-pyrroline-5-carboxylate. The protein is Gamma-glutamyl phosphate reductase of Halothermothrix orenii (strain H 168 / OCM 544 / DSM 9562).